A 332-amino-acid polypeptide reads, in one-letter code: Glycerol-3-phosphate dehydrogenase [NAD(P)+] (332 aa).

Residues serine 11, phenylalanine 12, lysine 32, and lysine 106 each coordinate NADPH. 3 residues coordinate sn-glycerol 3-phosphate: lysine 106, glycine 137, and serine 139. Alanine 141 provides a ligand contact to NADPH. Lysine 192, aspartate 245, serine 255, arginine 256, and asparagine 257 together coordinate sn-glycerol 3-phosphate. The active-site Proton acceptor is lysine 192. Arginine 256 provides a ligand contact to NADPH. The NADPH site is built by valine 280 and glutamate 282.

Belongs to the NAD-dependent glycerol-3-phosphate dehydrogenase family.

The protein resides in the cytoplasm. It catalyses the reaction sn-glycerol 3-phosphate + NAD(+) = dihydroxyacetone phosphate + NADH + H(+). The catalysed reaction is sn-glycerol 3-phosphate + NADP(+) = dihydroxyacetone phosphate + NADPH + H(+). The protein operates within membrane lipid metabolism; glycerophospholipid metabolism. Functionally, catalyzes the reduction of the glycolytic intermediate dihydroxyacetone phosphate (DHAP) to sn-glycerol 3-phosphate (G3P), the key precursor for phospholipid synthesis. This Staphylococcus aureus (strain Mu3 / ATCC 700698) protein is Glycerol-3-phosphate dehydrogenase [NAD(P)+].